The primary structure comprises 229 residues: Putative ankyrin repeat protein L148 (229 aa).

ANK repeat units follow at residues 70–95 (ILDY…PDNY), 96–126 (IGTE…DLRI), 127–156 (NNDY…NCQA), and 157–186 (YNNA…SVAA).

The chain is Putative ankyrin repeat protein L148 from Acanthamoeba polyphaga (Amoeba).